A 392-amino-acid chain; its full sequence is Outer membrane protein assembly factor BamB (392 aa).

The signal sequence occupies residues 1–19 (MQLRKLLLPGLLSVTLLSG). Cys-20 carries the N-palmitoyl cysteine lipid modification. The S-diacylglycerol cysteine moiety is linked to residue Cys-20.

It belongs to the BamB family. As to quaternary structure, part of the Bam complex, which is composed of the outer membrane protein BamA, and four lipoproteins BamB, BamC, BamD and BamE.

Its subcellular location is the cell outer membrane. Functionally, part of the outer membrane protein assembly complex, which is involved in assembly and insertion of beta-barrel proteins into the outer membrane. The protein is Outer membrane protein assembly factor BamB of Shigella dysenteriae serotype 1 (strain Sd197).